The chain runs to 146 residues: Ribosome maturation factor RimP (146 aa).

This sequence belongs to the RimP family.

Its subcellular location is the cytoplasm. Its function is as follows. Required for maturation of 30S ribosomal subunits. The protein is Ribosome maturation factor RimP of Helicobacter pylori (strain Shi470).